Consider the following 661-residue polypeptide: 72 kDa type IV collagenase (661 aa).

The first 30 residues, 1 to 30, serve as a signal peptide directing secretion; the sequence is MTEARVSRGALAALLRALCALGCLLGRAAA. Residues 31–110 constitute a propeptide, activation peptide; the sequence is APSPIIKFPG…PRCGNPDVAN (80 aa). The Cysteine switch signature appears at 101–108; that stretch reads PRCGNPDV. Cys103 is a Zn(2+) binding site. Residues 111 to 222 form a collagenase-like 1 region; it reads YNFFPRKPKW…LRTLGEGQVV (112 aa). Ca(2+) contacts are provided by Asp135 and Asp169. Zn(2+) is bound by residues His179 and Asp181. Residues Asp186 and Gly187 each coordinate Ca(2+). His194 contacts Zn(2+). The Ca(2+) site is built by Gly201, Gly203, and Asp205. His207 is a binding site for Zn(2+). Ca(2+) is bound by residues Asp209, Asp210, and Glu212. The segment at 223–397 is collagen-binding; that stretch reads RVKYGNADGE…WGFCPDQGYS (175 aa). 3 consecutive Fibronectin type-II domains span residues 229–277, 287–335, and 345–393; these read ADGE…FCPH, ADGQ…FCPE, and SEGA…FCPD. Intrachain disulfides connect Cys234–Cys260, Cys248–Cys275, Cys292–Cys318, Cys306–Cys333, Cys350–Cys376, and Cys364–Cys391. A collagenase-like 2 region spans residues 398-466; the sequence is LFLVAAHEFG…GPTPTLGPVT (69 aa). His404 serves as a coordination point for Zn(2+). The active site involves Glu405. Zn(2+)-binding residues include His408 and His414. A required for inhibitor TIMP2 binding region spans residues 415-661; the sequence is SQDPGALMAP…GSIKSDWLGC (247 aa). Hemopexin repeat units follow at residues 469–517, 518–564, 566–614, and 615–661; these read LCKQ…WPEL, PEKI…GLPP, VQKV…WNAI, and PDNL…WLGC. A disulfide bond links Cys470 and Cys661. The Ca(2+) site is built by Asp477, Asp522, and Asp570. The N-linked (GlcNAc...) asparagine glycan is linked to Asn574. Asp619 serves as a coordination point for Ca(2+). An N-linked (GlcNAc...) asparagine glycan is attached at Asn643.

This sequence belongs to the peptidase M10A family. As to quaternary structure, interacts (via the C-terminal hemopexin-like domains-containing region) with the integrin alpha-V/beta-3; the interaction promotes vascular invasion in angiogenic vessels and melamoma cells. Interacts (via the C-terminal PEX domain) with TIMP2 (via the C-terminal); the interaction inhibits the degradation activity. Interacts with GSK3B. Requires Ca(2+) as cofactor. Zn(2+) serves as cofactor. Post-translationally, phosphorylation on multiple sites modulates enzymatic activity. Phosphorylated by PKC in vitro. In terms of processing, the propeptide is processed by MMP14 (MT-MMP1) and MMP16 (MT-MMP3). Autocatalytic cleavage in the C-terminal produces the anti-angiogenic peptide, PEX. This processing appears to be facilitated by binding integrinv/beta3.

Its subcellular location is the secreted. The protein localises to the extracellular space. It is found in the extracellular matrix. It localises to the membrane. The protein resides in the nucleus. The enzyme catalyses Cleavage of gelatin type I and collagen types IV, V, VII, X. Cleaves the collagen-like sequence Pro-Gln-Gly-|-Ile-Ala-Gly-Gln.. Ubiquitinous metalloproteinase that is involved in diverse functions such as remodeling of the vasculature, angiogenesis, tissue repair, tumor invasion, inflammation, and atherosclerotic plaque rupture. As well as degrading extracellular matrix proteins, can also act on several nonmatrix proteins such as big endothelial 1 and beta-type CGRP promoting vasoconstriction. Also cleaves KISS at a Gly-|-Leu bond. Appears to have a role in myocardial cell death pathways. Contributes to myocardial oxidative stress by regulating the activity of GSK3beta. Cleaves GSK3beta in vitro. Involved in the formation of the fibrovascular tissues. Functionally, PEX, the C-terminal non-catalytic fragment of MMP2, possesses anti-angiogenic and anti-tumor properties and inhibits cell migration and cell adhesion to FGF2 and vitronectin. Ligand for integrin alpha-v/beta-3 on the surface of blood vessels. In Bos taurus (Bovine), this protein is 72 kDa type IV collagenase (MMP2).